The following is a 607-amino-acid chain: Glutamine--fructose-6-phosphate aminotransferase [isomerizing] (607 aa).

The active-site Nucleophile; for GATase activity is the Cys-2. The 216-residue stretch at 2–217 folds into the Glutamine amidotransferase type-2 domain; it reads CGIIGIIGND…DGDWAVLTRN (216 aa). 2 SIS domains span residues 283-422 and 455-597; these read IGID…ARGA and VCHD…VDQP. Catalysis depends on Lys-602, which acts as the For Fru-6P isomerization activity.

Homodimer.

The protein localises to the cytoplasm. The catalysed reaction is D-fructose 6-phosphate + L-glutamine = D-glucosamine 6-phosphate + L-glutamate. Catalyzes the first step in hexosamine metabolism, converting fructose-6P into glucosamine-6P using glutamine as a nitrogen source. The protein is Glutamine--fructose-6-phosphate aminotransferase [isomerizing] of Brucella suis biovar 1 (strain 1330).